Consider the following 1189-residue polypeptide: Phosphinothricin tripeptide synthetase PhsB (1189 aa).

The Carrier 1 domain occupies 5–80 (QTDDVVTGRI…ALAKRIRASR (76 aa)). Serine 40 is modified (O-(pantetheine 4'-phosphoryl)serine). Disordered stretches follow at residues 75-97 (RIRASRSTAPTASGPPRTAPVDS) and 454-476 (TPDRDGREPGEGPFAREESGGDT). Positions 100–541 (TAPLTFQQEP…VALLPLQEPA (442 aa)) are condensation. Residues 455 to 472 (PDRDGREPGEGPFAREES) show a composition bias toward basic and acidic residues. The segment at 572-969 (AQAHRTPDAV…GREDGQVKLR (398 aa)) is adenylation. The tract at residues 1045-1081 (DRVPLTPSGKTDRKALPDPAAGEQPRSGRGAAPGTPA) is disordered. Positions 1076-1151 (APGTPAEREL…DFALAVVTAQ (76 aa)) constitute a Carrier 2 domain. Position 1111 is an O-(pantetheine 4'-phosphoryl)serine (serine 1111).

Belongs to the NRP synthetase family. Pantetheine 4'-phosphate serves as cofactor.

It carries out the reaction holo-[peptidyl-carrier protein] + L-alanine + ATP = L-alanyl-[peptidyl-carrier protein] + AMP + diphosphate. Its pathway is secondary metabolite biosynthesis; bialaphos biosynthesis. In terms of biological role, involved in the biosynthesis of phosphinothricin tripeptide (PTT), also known as bialaphos (BA), a natural-product antibiotic and potent herbicide. Adenylates L-alanine and loads it onto a peptidyl carrier domain via a thioester linkage to the phosphopanthetheine moiety. Shows weaker activity with aminobutyric acid and L-serine. This chain is Phosphinothricin tripeptide synthetase PhsB, found in Streptomyces viridochromogenes (strain DSM 40736 / JCM 4977 / BCRC 1201 / Tue 494).